The primary structure comprises 316 residues: Aspartate carbamoyltransferase catalytic subunit (316 aa).

The carbamoyl phosphate site is built by Arg56 and Thr57. L-aspartate is bound at residue Lys84. Carbamoyl phosphate is bound by residues Arg106, His139, and Gln142. Arg172 and Arg226 together coordinate L-aspartate. The carbamoyl phosphate site is built by Gly267 and Pro268.

The protein belongs to the aspartate/ornithine carbamoyltransferase superfamily. ATCase family. Heterododecamer (2C3:3R2) of six catalytic PyrB chains organized as two trimers (C3), and six regulatory PyrI chains organized as three dimers (R2).

It catalyses the reaction carbamoyl phosphate + L-aspartate = N-carbamoyl-L-aspartate + phosphate + H(+). It participates in pyrimidine metabolism; UMP biosynthesis via de novo pathway; (S)-dihydroorotate from bicarbonate: step 2/3. In terms of biological role, catalyzes the condensation of carbamoyl phosphate and aspartate to form carbamoyl aspartate and inorganic phosphate, the committed step in the de novo pyrimidine nucleotide biosynthesis pathway. In Mycobacterium sp. (strain JLS), this protein is Aspartate carbamoyltransferase catalytic subunit.